Consider the following 286-residue polypeptide: Beta-lactamase SHV-2 (286 aa).

The N-terminal stretch at 1 to 21 (MRYIRLCIISLLATLPLAVHA) is a signal peptide. Ser-66 functions as the Acyl-ester intermediate in the catalytic mechanism. Cysteines 73 and 119 form a disulfide. Glu-164 (proton acceptor) is an active-site residue. Substrate is bound at residue 230–232 (KTG).

This sequence belongs to the class-A beta-lactamase family.

The enzyme catalyses a beta-lactam + H2O = a substituted beta-amino acid. Its function is as follows. This enzyme hydrolyzes cefotaxime, ceftazidime and other broad spectrum cephalosporins. The protein is Beta-lactamase SHV-2 (bla) of Escherichia coli.